A 449-amino-acid polypeptide reads, in one-letter code: Sensor histidine protein kinase/phosphatase WalK (449 aa).

Over 1–13 (MLDLLKQTIFTRD) the chain is Extracellular. The chain crosses the membrane as a helical span at residues 14-34 (FIFILILLGFILVVTLLLLEN). The region spanning 35-87 (RRDNIQLKQINQKVKDLIAGDYSKVLDMQGGSEITNITNNLNDLSEVIRLTQE) is the HAMP domain. Topologically, residues 35–449 (RRDNIQLKQI…EEVWEDEVED (415 aa)) are cytoplasmic. Residues 92 to 158 (ESKRLNSILF…YELRDLITQS (67 aa)) enclose the PAS domain. The PAC domain maps to 157-211 (QSPELLLDSQDINGEYLNLRVRFALIRRESGFISGLVAVLHDTTEQEKEERERRL). Residues 215–435 (NVSHELRTPL…TFTIVLPYDK (221 aa)) enclose the Histidine kinase domain. Position 218 is a phosphohistidine (His218).

As to quaternary structure, may form homodimers. May interact with serine/threonine-protein kinase StkP; the interaction may play a role in regulating Walk signal transduction. In terms of processing, autophosphorylated.

Its subcellular location is the membrane. The catalysed reaction is ATP + protein L-histidine = ADP + protein N-phospho-L-histidine.. Member of the two-component regulatory system WalK/WalR that regulates genes involved in cell wall metabolism. Functions as a sensor protein kinase which is autophosphorylated at a histidine residue and transfers its phosphate group to WalR. In turn, WalR binds to the upstream promoter regions of target genes to positively and negatively regulate their expression. Required to maintain expression of WalRK regulon genes in exponentially growing cells, including peptidoglycan hydrolase pcsB. Phosphorylates WalR and also capable of dephosphorylation of WalR. WalK phosphatase activity is probably involved in preventing cross-talk from PnpS and other non-cognate sensor kinases during exponential growth. May be considered a potential virulence factor. The sequence is that of Sensor histidine protein kinase/phosphatase WalK from Streptococcus pneumoniae serotype 2 (strain D39 / NCTC 7466).